The following is a 54-amino-acid chain: Large ribosomal subunit protein bL33 (54 aa).

The protein belongs to the bacterial ribosomal protein bL33 family.

The protein is Large ribosomal subunit protein bL33 of Corynebacterium urealyticum (strain ATCC 43042 / DSM 7109).